The chain runs to 355 residues: Sulfate/thiosulfate import ATP-binding protein CysA (355 aa).

The ABC transporter domain maps to 3 to 233; the sequence is IIINNVSKQF…PASPFVMGFI (231 aa). Residue 35–42 participates in ATP binding; that stretch reads GPSGSGKS.

The protein belongs to the ABC transporter superfamily. Sulfate/tungstate importer (TC 3.A.1.6) family. The complex is composed of two ATP-binding proteins (CysA), two transmembrane proteins (CysT and CysW) and a solute-binding protein (CysP).

The protein resides in the cell inner membrane. The catalysed reaction is sulfate(out) + ATP + H2O = sulfate(in) + ADP + phosphate + H(+). It carries out the reaction thiosulfate(out) + ATP + H2O = thiosulfate(in) + ADP + phosphate + H(+). Functionally, part of the ABC transporter complex CysAWTP involved in sulfate/thiosulfate import. Responsible for energy coupling to the transport system. This is Sulfate/thiosulfate import ATP-binding protein CysA from Synechocystis sp. (strain ATCC 27184 / PCC 6803 / Kazusa).